A 406-amino-acid chain; its full sequence is Peptide chain release factor PrfB3, chloroplastic (406 aa).

It belongs to the prokaryotic/mitochondrial release factor family. As to quaternary structure, interacts with PDE338.

It localises to the plastid. It is found in the chloroplast stroma. The protein resides in the chloroplast. Functionally, involved in the light- and stress-dependent regulation of stability of 3' processed petB transcripts, thus regulating cytochrome b6 accumulation, a rate-limiting step in photosynthetic electron transport. May be recruited to specifically protect petB transcripts against 3'-5' exonucleolytic attack by masking the 3' ends. Does not function as release factor. The protein is Peptide chain release factor PrfB3, chloroplastic of Arabidopsis thaliana (Mouse-ear cress).